The sequence spans 360 residues: Phosphoserine aminotransferase (360 aa).

Residue Arg-41 coordinates L-glutamate. Pyridoxal 5'-phosphate contacts are provided by residues 75–76 (AS), Trp-101, Thr-151, Asp-171, and Gln-194. Lys-195 is modified (N6-(pyridoxal phosphate)lysine). A pyridoxal 5'-phosphate-binding site is contributed by 236–237 (NT).

The protein belongs to the class-V pyridoxal-phosphate-dependent aminotransferase family. SerC subfamily. In terms of assembly, homodimer. Requires pyridoxal 5'-phosphate as cofactor.

The protein resides in the cytoplasm. It catalyses the reaction O-phospho-L-serine + 2-oxoglutarate = 3-phosphooxypyruvate + L-glutamate. It carries out the reaction 4-(phosphooxy)-L-threonine + 2-oxoglutarate = (R)-3-hydroxy-2-oxo-4-phosphooxybutanoate + L-glutamate. The protein operates within amino-acid biosynthesis; L-serine biosynthesis; L-serine from 3-phospho-D-glycerate: step 2/3. It participates in cofactor biosynthesis; pyridoxine 5'-phosphate biosynthesis; pyridoxine 5'-phosphate from D-erythrose 4-phosphate: step 3/5. Functionally, catalyzes the reversible conversion of 3-phosphohydroxypyruvate to phosphoserine and of 3-hydroxy-2-oxo-4-phosphonooxybutanoate to phosphohydroxythreonine. The sequence is that of Phosphoserine aminotransferase from Herpetosiphon aurantiacus (strain ATCC 23779 / DSM 785 / 114-95).